Reading from the N-terminus, the 314-residue chain is Acetyl-coenzyme A carboxylase carboxyl transferase subunit beta (314 aa).

The CoA carboxyltransferase N-terminal domain maps to Leu37–Tyr307. Zn(2+) is bound by residues Cys41, Cys44, Cys60, and Cys63. The segment at Cys41–Cys63 adopts a C4-type zinc-finger fold.

This sequence belongs to the AccD/PCCB family. In terms of assembly, acetyl-CoA carboxylase is a heterohexamer composed of biotin carboxyl carrier protein (AccB), biotin carboxylase (AccC) and two subunits each of ACCase subunit alpha (AccA) and ACCase subunit beta (AccD). Zn(2+) serves as cofactor.

The protein localises to the cytoplasm. The catalysed reaction is N(6)-carboxybiotinyl-L-lysyl-[protein] + acetyl-CoA = N(6)-biotinyl-L-lysyl-[protein] + malonyl-CoA. The protein operates within lipid metabolism; malonyl-CoA biosynthesis; malonyl-CoA from acetyl-CoA: step 1/1. In terms of biological role, component of the acetyl coenzyme A carboxylase (ACC) complex. Biotin carboxylase (BC) catalyzes the carboxylation of biotin on its carrier protein (BCCP) and then the CO(2) group is transferred by the transcarboxylase to acetyl-CoA to form malonyl-CoA. This chain is Acetyl-coenzyme A carboxylase carboxyl transferase subunit beta, found in Synechococcus sp. (strain JA-3-3Ab) (Cyanobacteria bacterium Yellowstone A-Prime).